A 709-amino-acid chain; its full sequence is Ribosomal RNA large subunit methyltransferase K/L (709 aa).

A THUMP domain is found at 43-154 (LAYRITLWTR…NGVITIAMNF (112 aa)).

It belongs to the methyltransferase superfamily. RlmKL family.

It localises to the cytoplasm. It carries out the reaction guanosine(2445) in 23S rRNA + S-adenosyl-L-methionine = N(2)-methylguanosine(2445) in 23S rRNA + S-adenosyl-L-homocysteine + H(+). It catalyses the reaction guanosine(2069) in 23S rRNA + S-adenosyl-L-methionine = N(2)-methylguanosine(2069) in 23S rRNA + S-adenosyl-L-homocysteine + H(+). Its function is as follows. Specifically methylates the guanine in position 2445 (m2G2445) and the guanine in position 2069 (m7G2069) of 23S rRNA. In Shewanella baltica (strain OS195), this protein is Ribosomal RNA large subunit methyltransferase K/L.